The chain runs to 218 residues: Large ribosomal subunit protein uL3 (218 aa).

Belongs to the universal ribosomal protein uL3 family. In terms of assembly, part of the 50S ribosomal subunit. Forms a cluster with proteins L14 and L19.

One of the primary rRNA binding proteins, it binds directly near the 3'-end of the 23S rRNA, where it nucleates assembly of the 50S subunit. This is Large ribosomal subunit protein uL3 from Rhodococcus jostii (strain RHA1).